Consider the following 361-residue polypeptide: Teichoic acids export ATP-binding protein TagH (361 aa).

Positions 13–246 (TKEYDLYKSQ…YREFTKWFKG (234 aa)) constitute an ABC transporter domain. ATP is bound at residue 60–67 (GVNGSGKS). The tract at residues 247 to 361 (QSKKEKKHFQ…HDTNATSGVK (115 aa)) is unknown.

It belongs to the ABC transporter superfamily. Teichoic acids exporter (TC 3.A.1.104.1) family. In terms of assembly, the complex is composed of two ATP-binding proteins (TagH) and two transmembrane proteins (TagG).

Its subcellular location is the cell membrane. It carries out the reaction ATP + H2O + teichoic acidSide 1 = ADP + phosphate + teichoic acidSide 2.. Functionally, part of the ABC transporter complex TagGH involved in teichoic acids export. Responsible for energy coupling to the transport system. This Levilactobacillus brevis (strain ATCC 367 / BCRC 12310 / CIP 105137 / JCM 1170 / LMG 11437 / NCIMB 947 / NCTC 947) (Lactobacillus brevis) protein is Teichoic acids export ATP-binding protein TagH.